We begin with the raw amino-acid sequence, 665 residues long: Sodium-dependent phosphate transporter 1-B (665 aa).

6 helical membrane passes run 26–46 (YMWLLIVGFIIAFVLAFSVGA), 67–87 (ACILASIFETLGSVLLGAKVS), 107–127 (LMAGSVSAMFGSAVWQLAASF), 163–183 (IVASWFLSPLLSGVMSAVLFY), 202–222 (ALPFFYAVTMGINLFSIMFTG), and 235–255 (GVLLISIGFGIITALIVWFAV). Disordered regions lie at residues 294 to 345 (VPEE…APKT) and 423 to 442 (ESEFRASEDGDKEKAGAQER). Low complexity predominate over residues 296 to 306 (EESSVLSSSTP). Residues 329–338 (ADQKDCKESD) show a composition bias toward basic and acidic residues. The next 4 helical transmembrane spans lie at 499-519 (VSMLFQFLQILTACFGSFAHG), 548-568 (TPIWLLLYGGVGICVGLWVWG), 588-608 (FSIELASAVTVVVASNIGLPV), and 638-658 (IFMAWFVTVPISGLISAAIMA).

This sequence belongs to the inorganic phosphate transporter (PiT) (TC 2.A.20) family.

It is found in the membrane. Its function is as follows. Sodium-phosphate symporter which plays a fundamental housekeeping role in phosphate transport. The polypeptide is Sodium-dependent phosphate transporter 1-B (slc20a1b) (Danio rerio (Zebrafish)).